Here is a 476-residue protein sequence, read N- to C-terminus: Glycogen synthase (476 aa).

An ADP-alpha-D-glucose-binding site is contributed by lysine 15.

It belongs to the glycosyltransferase 1 family. Bacterial/plant glycogen synthase subfamily.

It carries out the reaction [(1-&gt;4)-alpha-D-glucosyl](n) + ADP-alpha-D-glucose = [(1-&gt;4)-alpha-D-glucosyl](n+1) + ADP + H(+). Its pathway is glycan biosynthesis; glycogen biosynthesis. Functionally, synthesizes alpha-1,4-glucan chains using ADP-glucose. This Haemophilus influenzae (strain PittGG) protein is Glycogen synthase.